Here is a 244-residue protein sequence, read N- to C-terminus: MTKPFILLVPGSFAPETIYASTIAHLRTLGFPAVALRLPTTTKRMPLPAATMAEDADVIKRSVEAVLATGQEVVVVCHSYGGTPTTQALGELGEKKGVRRVVYLSAIIPRVGESNNDAMGGKKGELAFEMTEGYMHIDATTFAPAVCNDLSWDLAYEHTLNLAHHSGASFLEPATQAGYLDIPVSYIFCEKDMVVTPEKQSGFIDVVKEATGKEVHVVKLDAGHCPNWSMPEKLGDVIAEMAGM.

A signal peptide spans 1 to 20 (MTKPFILLVPGSFAPETIYA). Residues aspartate 192 and histidine 224 each act as charge relay system in the active site. The N-linked (GlcNAc...) asparagine glycan is linked to asparagine 227.

It belongs to the AB hydrolase superfamily.

The protein operates within secondary metabolite biosynthesis. Its function is as follows. Probable hydrolase; part of the gene cluster that mediates the biosynthesis of squalestatin S1 (SQS1, also known as zaragozic acid A), a lead compound for the treatment of hyper-cholesterolemia by targeting squalene synthase (SS). Both phenylalanine and benzoic acid are known precursors of SQS1 and so it is unsurprising that the cluster also contains genes potentially involved in benzoate production such as phenyl-alanine ammonia lysase (PAL) M7, which catalyzes the first step in the degradation of phenylalanine, or the NADP-dependent dehydrogenase M3. The cluster contains two PKS encoding genes. The tetraketide synthase is responsible for the biosynthesis of the tetraketide sidechain of SQS1. The biosynthesis must involve 3 rounds of chain extension. After the first and second rounds methyl-transfer occurs, and in all rounds of extension the ketoreductase and dehydratase areactive. The enoyl reductase and C-MeT are not active in the final round of extension. The other PKS is therefore likely to encode squalestatin hexaketide synthase (SQHKS). The hexaketide main chain is initiated by benzoate which is an unusual starter unit for a highly reducing polyketide synthase. The cluster also contains a gene encoding a citrate synthase-like protein R3 presumably involved in linking the hexaketide to the oxaloacetate moiety. Formation of the tetraketide CoA may be catalyzed by the M9 CoA ligase, but the mechanism of release of the tetraketide and the hexaketide from their respective PKS remains unknown, although the cluster encodes a potential esterase (M8) and a possible hydrolase (M10) which could be involved in these processes. Two acyltransferases (AT), M4 and R4, are also encoded in the cluster. M4 is responsible for loading of the tetraketide sidechain from CoA onto the squalestatin core as the final step of biosynthesis. M4 appears to have a broad substrate selectivity for its acyl CoA substrate, allowing the in vitro synthesis of novel squalestatins. The biosynthesis of SQS1 requires several oxidative steps likely performed by oxidoreductases M1, R1 and R2. Finally, in support of the identification of the cluster as being responsible for SQS1 production, the cluster contains a gene encoding a putative squalene synthase (SS) R6, suggesting a likely mechanism for self-resistance. The chain is Probable hydrolase R7 from Phoma sp. (strain ATCC 20986 / MF5453).